The primary structure comprises 451 residues: tRNA-2-methylthio-N(6)-dimethylallyladenosine synthase (451 aa).

Residues 1-116 (MTYFFETYGC…LPQIFDEIKA (116 aa)) form the MTTase N-terminal domain. [4Fe-4S] cluster is bound by residues C10, C46, C79, C162, C166, and C169. The 237-residue stretch at 148–384 (SPKSFQSYVP…IDLQLKITAK (237 aa)) folds into the Radical SAM core domain. A TRAM domain is found at 387–451 (KAKLGKKVDI…KGKTFRANLN (65 aa)).

Belongs to the methylthiotransferase family. MiaB subfamily. Monomer. It depends on [4Fe-4S] cluster as a cofactor.

Its subcellular location is the cytoplasm. It catalyses the reaction N(6)-dimethylallyladenosine(37) in tRNA + (sulfur carrier)-SH + AH2 + 2 S-adenosyl-L-methionine = 2-methylsulfanyl-N(6)-dimethylallyladenosine(37) in tRNA + (sulfur carrier)-H + 5'-deoxyadenosine + L-methionine + A + S-adenosyl-L-homocysteine + 2 H(+). In terms of biological role, catalyzes the methylthiolation of N6-(dimethylallyl)adenosine (i(6)A), leading to the formation of 2-methylthio-N6-(dimethylallyl)adenosine (ms(2)i(6)A) at position 37 in tRNAs that read codons beginning with uridine. The sequence is that of tRNA-2-methylthio-N(6)-dimethylallyladenosine synthase from Treponema denticola (strain ATCC 35405 / DSM 14222 / CIP 103919 / JCM 8153 / KCTC 15104).